Consider the following 571-residue polypeptide: Penicillin-binding protein activator LpoA (571 aa).

The first 26 residues, 1-26 (MMTILLQHTHLKNRLMPFLLALFLAG), serve as a signal peptide directing secretion. Cys27 carries N-palmitoyl cysteine lipidation. The S-diacylglycerol cysteine moiety is linked to residue Cys27.

It belongs to the LpoA family. As to quaternary structure, interacts with PBP1a.

Its subcellular location is the cell outer membrane. Its function is as follows. Regulator of peptidoglycan synthesis that is essential for the function of penicillin-binding protein 1A (PBP1a). The protein is Penicillin-binding protein activator LpoA of Pasteurella multocida (strain Pm70).